Here is a 139-residue protein sequence, read N- to C-terminus: Putative pre-16S rRNA nuclease (139 aa).

The protein belongs to the YqgF nuclease family.

It localises to the cytoplasm. In terms of biological role, could be a nuclease involved in processing of the 5'-end of pre-16S rRNA. The polypeptide is Putative pre-16S rRNA nuclease (Streptococcus suis (strain 98HAH33)).